The sequence spans 144 residues: MMQELGLQRFSNDVVRLDLTPPSQTSSTSLSIDEEESTEAKIRRLISEHPVIIFSRSSCCMCHVMKRLLATIGVIPTVIELDDHEVSSLPTALQDEYSGGVSVVGPPPAVFIGRECVGGLESLVALHLSGQLVPKLVQVGALWV.

A Glutaredoxin domain is found at 39 to 143; sequence EAKIRRLISE…PKLVQVGALW (105 aa). Cysteine 59 and cysteine 62 are joined by a disulfide.

This sequence belongs to the glutaredoxin family. CC-type subfamily.

The protein localises to the cytoplasm. Its function is as follows. Has a glutathione-disulfide oxidoreductase activity in the presence of NADPH and glutathione reductase. Reduces low molecular weight disulfides and proteins. This chain is Glutaredoxin-C6 (GRXC6), found in Arabidopsis thaliana (Mouse-ear cress).